Consider the following 644-residue polypeptide: 1-deoxy-D-xylulose-5-phosphate synthase (644 aa).

Thiamine diphosphate is bound by residues H78 and 120 to 122; that span reads GHA. D149 contacts Mg(2+). Thiamine diphosphate-binding positions include 150–151, N178, and E373; that span reads AA. A Mg(2+)-binding site is contributed by N178.

It belongs to the transketolase family. DXPS subfamily. As to quaternary structure, homodimer. Requires Mg(2+) as cofactor. Thiamine diphosphate is required as a cofactor.

It catalyses the reaction D-glyceraldehyde 3-phosphate + pyruvate + H(+) = 1-deoxy-D-xylulose 5-phosphate + CO2. Its pathway is metabolic intermediate biosynthesis; 1-deoxy-D-xylulose 5-phosphate biosynthesis; 1-deoxy-D-xylulose 5-phosphate from D-glyceraldehyde 3-phosphate and pyruvate: step 1/1. In terms of biological role, catalyzes the acyloin condensation reaction between C atoms 2 and 3 of pyruvate and glyceraldehyde 3-phosphate to yield 1-deoxy-D-xylulose-5-phosphate (DXP). This is 1-deoxy-D-xylulose-5-phosphate synthase from Chlamydia caviae (strain ATCC VR-813 / DSM 19441 / 03DC25 / GPIC) (Chlamydophila caviae).